A 367-amino-acid chain; its full sequence is Protein-glutamate methylesterase/protein-glutamine glutaminase (367 aa).

Residues 6 to 123 enclose the Response regulatory domain; that stretch reads RVLVVDDSAF…SLGIKQLADE (118 aa). A 4-aspartylphosphate modification is found at Asp57. One can recognise a CheB-type methylesterase domain in the interval 165 to 361; it reads ISKKEIVVVI…DILLKKVNEY (197 aa). Active-site residues include Ser177, His204, and Asp303.

It belongs to the CheB family. Phosphorylated by CheA. Phosphorylation of the N-terminal regulatory domain activates the methylesterase activity.

Its subcellular location is the cytoplasm. It catalyses the reaction [protein]-L-glutamate 5-O-methyl ester + H2O = L-glutamyl-[protein] + methanol + H(+). The enzyme catalyses L-glutaminyl-[protein] + H2O = L-glutamyl-[protein] + NH4(+). Functionally, involved in chemotaxis. Part of a chemotaxis signal transduction system that modulates chemotaxis in response to various stimuli. Catalyzes the demethylation of specific methylglutamate residues introduced into the chemoreceptors (methyl-accepting chemotaxis proteins or MCP) by CheR. Also mediates the irreversible deamidation of specific glutamine residues to glutamic acid. In Caldanaerobacter subterraneus subsp. tengcongensis (strain DSM 15242 / JCM 11007 / NBRC 100824 / MB4) (Thermoanaerobacter tengcongensis), this protein is Protein-glutamate methylesterase/protein-glutamine glutaminase.